A 167-amino-acid chain; its full sequence is SsrA-binding protein (167 aa).

Residues 139–158 (QNHDKRDAAKDRDWQRDKQR) are compositionally biased toward basic and acidic residues. Residues 139-167 (QNHDKRDAAKDRDWQRDKQRVMRRHNRDA) form a disordered region.

This sequence belongs to the SmpB family.

It is found in the cytoplasm. In terms of biological role, required for rescue of stalled ribosomes mediated by trans-translation. Binds to transfer-messenger RNA (tmRNA), required for stable association of tmRNA with ribosomes. tmRNA and SmpB together mimic tRNA shape, replacing the anticodon stem-loop with SmpB. tmRNA is encoded by the ssrA gene; the 2 termini fold to resemble tRNA(Ala) and it encodes a 'tag peptide', a short internal open reading frame. During trans-translation Ala-aminoacylated tmRNA acts like a tRNA, entering the A-site of stalled ribosomes, displacing the stalled mRNA. The ribosome then switches to translate the ORF on the tmRNA; the nascent peptide is terminated with the 'tag peptide' encoded by the tmRNA and targeted for degradation. The ribosome is freed to recommence translation, which seems to be the essential function of trans-translation. The sequence is that of SsrA-binding protein from Xanthomonas axonopodis pv. citri (strain 306).